The following is a 246-amino-acid chain: Glucosamine-6-phosphate deaminase (246 aa).

Asp-67 acts as the Proton acceptor; for enolization step in catalysis. The active-site For ring-opening step is Asn-136. The active-site Proton acceptor; for ring-opening step is the His-138. The For ring-opening step role is filled by Glu-143.

The protein belongs to the glucosamine/galactosamine-6-phosphate isomerase family. NagB subfamily.

The catalysed reaction is alpha-D-glucosamine 6-phosphate + H2O = beta-D-fructose 6-phosphate + NH4(+). Its pathway is amino-sugar metabolism; N-acetylneuraminate degradation; D-fructose 6-phosphate from N-acetylneuraminate: step 5/5. In terms of biological role, catalyzes the reversible isomerization-deamination of glucosamine 6-phosphate (GlcN6P) to form fructose 6-phosphate (Fru6P) and ammonium ion. This chain is Glucosamine-6-phosphate deaminase, found in Halalkalibacterium halodurans (strain ATCC BAA-125 / DSM 18197 / FERM 7344 / JCM 9153 / C-125) (Bacillus halodurans).